We begin with the raw amino-acid sequence, 128 residues long: V-type proton ATPase subunit F (128 aa).

It belongs to the V-ATPase F subunit family. V-ATPase is a heteromultimeric enzyme composed of a peripheral catalytic V1 complex (components A to H) attached to an integral membrane V0 proton pore complex (components: a, c, c'', d and e).

The protein resides in the vacuole membrane. Functionally, subunit of the peripheral V1 complex of vacuolar ATPase essential for assembly or catalytic function. V-ATPase is responsible for acidifying a variety of intracellular compartments in eukaryotic cells. This Arabidopsis thaliana (Mouse-ear cress) protein is V-type proton ATPase subunit F (VHA-F).